The following is a 128-amino-acid chain: Flagellar assembly factor FliW (128 aa).

It belongs to the FliW family. Interacts with translational regulator CsrA and flagellin(s).

It localises to the cytoplasm. Acts as an anti-CsrA protein, binds CsrA and prevents it from repressing translation of its target genes, one of which is flagellin. Binds to flagellin and participates in the assembly of the flagellum. The protein is Flagellar assembly factor FliW of Campylobacter fetus subsp. fetus (strain 82-40).